A 525-amino-acid chain; its full sequence is DNA damage-binding protein cmr1 (525 aa).

Positions Thr34–Ser50 are enriched in polar residues. Disordered regions lie at residues Thr34–Lys103, Asp214–Pro240, and Thr282–Gly301. The segment covering Glu83–Ala102 has biased composition (basic and acidic residues). One copy of the WD 1 repeat lies at Ile182 to Ala223. Acidic residues predominate over residues Glu227–Asp239. 5 WD repeats span residues Pro247–Lys287, Leu339–Pro379, Glu384–Lys425, Gly448–Leu491, and Asp494–Met525.

This sequence belongs to the WD repeat DDB2/WDR76 family.

Functionally, DNA-binding protein that binds to both single- and double-stranded DNA. Binds preferentially to UV-damaged DNA. May be involved in DNA-metabolic processes. In Emericella nidulans (strain FGSC A4 / ATCC 38163 / CBS 112.46 / NRRL 194 / M139) (Aspergillus nidulans), this protein is DNA damage-binding protein cmr1.